The following is a 993-amino-acid chain: Replication protein 1a (993 aa).

A methyltransferase region spans residues 50-408; sequence RNALDVKDSE…TIVINGMAMQ (359 aa). The region spanning 72–289 is the Alphavirus-like MT domain; the sequence is HLTQQEQAPH…HKWENVKSFL (218 aa). The interval 525–581 is disordered; sequence AEDRKQKAEAASQIPVDEIPDDTAESSDDTPREADTNQKSEPSSPELETLSTQTRSP. Residues 542-552 are compositionally biased toward acidic residues; sequence EIPDDTAESSD. The segment covering 553–562 has biased composition (basic and acidic residues); the sequence is DTPREADTNQ. The segment covering 564–576 has biased composition (low complexity); sequence SEPSSPELETLST. The region spanning 682–838 is the (+)RNA virus helicase ATP-binding domain; the sequence is IVNADCVISN…TIIPDETDTA (157 aa). The segment at 711–975 is ATP-dependent helicase; sequence LVDGVAGCGK…VTRHKKTFRY (265 aa). ATP is bound at residue 714–721; it reads GVAGCGKT. One can recognise a (+)RNA virus helicase C-terminal domain in the interval 839–993; the sequence is DTTFRSPQDV…DLIAECLARV (155 aa).

It belongs to the bromoviridae replication protein 1a family. Interacts with RNA-directed RNA polymerase 2a.

The protein localises to the host endoplasmic reticulum membrane. Functionally, involved in the virus replication. Contains a helicase domain and a methyltransferase domain. The methyltransferase domain is probably involved in viral RNA capping. Involved in the formation of ER membrane spherular invaginations in which RNA replication complexes form. The polypeptide is Replication protein 1a (Canna (Florist's daisy)).